A 368-amino-acid chain; its full sequence is UDP-N-acetylglucosamine--N-acetylmuramyl-(pentapeptide) pyrophosphoryl-undecaprenol N-acetylglucosamine transferase (368 aa).

UDP-N-acetyl-alpha-D-glucosamine contacts are provided by residues 14–16 (TGG), asparagine 125, arginine 168, serine 196, and glutamine 297.

Belongs to the glycosyltransferase 28 family. MurG subfamily.

The protein localises to the cell inner membrane. The enzyme catalyses di-trans,octa-cis-undecaprenyl diphospho-N-acetyl-alpha-D-muramoyl-L-alanyl-D-glutamyl-meso-2,6-diaminopimeloyl-D-alanyl-D-alanine + UDP-N-acetyl-alpha-D-glucosamine = di-trans,octa-cis-undecaprenyl diphospho-[N-acetyl-alpha-D-glucosaminyl-(1-&gt;4)]-N-acetyl-alpha-D-muramoyl-L-alanyl-D-glutamyl-meso-2,6-diaminopimeloyl-D-alanyl-D-alanine + UDP + H(+). The protein operates within cell wall biogenesis; peptidoglycan biosynthesis. In terms of biological role, cell wall formation. Catalyzes the transfer of a GlcNAc subunit on undecaprenyl-pyrophosphoryl-MurNAc-pentapeptide (lipid intermediate I) to form undecaprenyl-pyrophosphoryl-MurNAc-(pentapeptide)GlcNAc (lipid intermediate II). The protein is UDP-N-acetylglucosamine--N-acetylmuramyl-(pentapeptide) pyrophosphoryl-undecaprenol N-acetylglucosamine transferase of Nitrobacter winogradskyi (strain ATCC 25391 / DSM 10237 / CIP 104748 / NCIMB 11846 / Nb-255).